The primary structure comprises 3471 residues: MANRRVGRGCWEVSPTERRPPAAEEEASSPPVLSLSHFCRSPFLCFGDVLLGASRTLSLALDNPNEEVAEVKISHFPAADLGFSVSQRCFVLQPKEKIVISVNWTPFKEGRVREIMTFLVNDVLKHQAILLGNAEEQKKKKRSLWDTIKKKKISASTSHNRRVSNIQNVNKTFSVSQKVDRVRSPLQACENLAMNEGGPPTENNSLTLEGNKIPISPISPAFNECHGETCLPLSVRRSTTYSSLHASENRELLNVDSASVSKVSFNEKAVTETSFNSINVNGQSGENSKLSLTPNYSSTLNITQSQIHFLSPDSFVNNSHGANNELELVTCLSSDMFMKDNSKPVHLESTIAHEIYQKILSPDSFIKDNYGLNQDVESESVNPILSPNQFLKDNMAYMCTSQQTCKVPLSNENSQVPQSPQDWRKSEVLPRIPECQGSKSPKAIFEELVEMKSNYYSFIKQNNPKFSVVQDISSHSHNKQPKRRPILSATVTKRKATCTRENQTEINKPKAKRCLNSAVGEHEKVINNQKEKEDFHSYLPIIDPILSKSKSYKNEVTPSSTTASVARKRKSDGSMEDADVRVAVTEHTEVREIKRIHFSPSEPKTSAVKKTKNVITPISKRISNREKLNLKKKTDLSIFKTPISKTNKRTKPIIAVAQSNLTFIKPLKTDIPRHPMPFAAKNMFYDERWKEKQEQGFTWWLNFILTPDDFTVKTNISEVNAATLLLGIENQHKISVPRAPTKEEMSLRAYTARCRLNRLRRAACRLFTSEKMIKAIKKLEIEIEARRLIVRKDRHLWKDVGERQKVLNWLLSYNPLWLRIGLETTYGELISLEDNSDVTGLAMFILNRLLWNPDIAAEYRHPTVPHLYRDGHEEALSKFTLKKLLLLVCFLDYAKISRLIDHDPCLFCKDAEFKASKEILLAFSRDFLSGEGDLSRHLGLLGLPVNHVQTPFDEFDFAVTNLAVDLQCGVRLVRTMELLTQNWDLSKKLRIPAISRLQKMHNVDIVLQVLKSRGIELSDEHGNTILSKDIVDRHREKTLRLLWKIAFAFQVDISLNLDQLKEEIAFLKHTKSIKKTISLLSCHSDDLINKKKGKRDSGSFEQYSENIKLLMDWVNAVCAFYNKKVENFTVSFSDGRVLCYLIHHYHPCYVPFDAICQRTTQTVECTQTGSVVLNSSSESDDSSLDMSLKAFDHENTSELYKELLENEKKNFHLVRSAVRDLGGIPAMINHSDMSNTIPDEKVVITYLSFLCARLLDLRKEIRAARLIQTTWRKYKLKTDLKRHQEREKAARIIQSAVINFLAKQRLRKRVNAALVVQKYWRRVLAQRKLLMLKKEKLEKVQNKAASLIQGYWRRYSTRRRFLKLKYYSIILQSRIRMIIAVTSYKRYLWATVTIQRHWRAYLRRKQDQQRYEMLKSSTLIIQSMFRKWKRRKMQSQVKATVILQRAFREWHLRKQAKEENSAIVIQSWYRMHKELRKYIYIRSCVVIIQKRFRCFQAQKLYKRKKESILTIQKYYKAYLKGKIERTNYLQKRAAAIQLQAAFRRLKAHNLCRQIRAAGVIQSYWRMRQDRVRFLNLKKTIIKLQAHVRKHQQLQKYKKMKKAAVIIQTHFRAYIFARKVLASYQKTRSAVIVLQSAYRGMQARKMYIHILTSVIKIQSYYRAYVSKKEFLSLKNATIKLQSIVKVKQTRKQYLHLRAAALFIQQCYRSKKIAAQKREEYMQMRESCIKLQAFVRGYRVRKQMRLQRKAVISLQSYFRMRKARQYYLKMYKAIIVIQNYYHAYKAQVNQRKNFLQVKKAATCLQAAYRGYKVRQLIKQQSIAALKIQSAFRGYNKRIKYQSVLQSIIKIQRWYRAYKTLHDTRTHFLKTKAAVISLQSTYRGWKVRKQIRREHQAALKIQSAFRMAKARKQFRLFKTAALVIQQNFRAWTAGRKQRMEYIELRHAVLMLQSMWKGKTLRRQLQRQHKCAIIIQSYYRMHVQQKKWKIMKKAALLIQKYYRAYSIGREQNHLYLKTKAAVVTLQSAYRGMKVRKRIKDCNKAAVTIQSKYRAYKTKKKYATYRASAIIIQRWYRGIKITNHQHKEYLNLKKTAIKIQSVYRGIRVRRHIQHMHRAATFIKAMFKMHQSRISYHTMRKAAIVIQVRFRAYYQGKMQHEKYLTILKAVKILQASFRGVRVRRTLRKMQIAATLIQSNYRRYRQQTYFNKLKKITKTVQQRYRAMKERNIQFQRYNKLRHSVIYIQAIFRGKKARRHLKMMHIAATLIQRRFRTLMMRRRFLSLKKTAIWIQRKYRAHLYTKHHLQFLRVQNAVIKIQSSYRRWMIRKRMREMHRAATFIQAIFRMRRLHMRYQALKQASVVIQQQYQANRAAKLQRQHYLRQRHSAVILQAAFRGMKTRRHLKSMHSSATLIQSRFRSLLVRRRFISLKKATIFVQRKYRATICAKHKLHQFLHLRKSAITIQSSYRRLMVKKKLQEMQRAAVLIQATFRMHRTYITFQTWKHASILIQQHYRTYRAAKLQRENYIRQWHSAVVIQAAYKGMKARQLLREKHKAAIIIQSTYRMYRQYCFYQKLQWATKIIQEKYRANKKKQKAFQHNELKKETCVQAGFQDMNIKKQIQDQHQAAIIIQKNCKAFKIRKHYLHLRATVVSIQRRYRKLTAVRTQAVICIQSYYRGFKVRKDIQNMHRAATLIQSFYRMHRAKVDYQTKKTAIVVIQNYYRLYVRVKTERKSFLAVQKSVRTIQPAFRGMKVRQKLKNLSEEKMAAIVNQSALCCYRSKTQYEAVQSEGVMIQEWYKASGLACSQEAEYHSQSRAAVTIQKAFCRMATRKLETQKCAALRIQFFLQMAVYRRRFVQQKRAAITLQHYFRTWQTRKQFLLYRKAAVVLQNHYRAFLSAKHQRQVYLQIRSSVIIIQARSKGFIQKRKFQEIKNSTIKIQAIWRRYRAKKYLCKVKAACKIQAWYRCWRAHKEYLAILKAVKIIQGCFYTKLERTRFLNVRASAIIIQRKWRAILSAKIAHEHFLMIKRHRATCLIQAHYRGYKGRQVFLRQKSAALVIQKYIRAREAGKRERIKYIEFKKSTVILQALVRGWLVRKRILEQRAKIRLLHFTAAAYYHLNALRIQRAYKLYLAVKNANKQVNSVICIQRWFRARLQRKRFIQKYHSIKKIEHEGQECLSQQNRAASVIQKAVRHFLLRKKQEKFTSGIIKIQALWRGYSWRKKNDCTKIKAIRLSLQVVNREIREENKLYKRTALALHYLLTYKHLSAILEALKHLEVVTRLSPLCCENMAQSGAISKIFVLIRSCNRSVPCMEVIRYAVQVLLNVSKYEKTTSAVYDVENCIDILLELLQIYREKPGNKVADKGGSIFTKTCCLLAILLKTTNRASDVRSRSKVVDRIYSLYKLTAHKHKMNTERILYKQKKNSSISIPFIPETPVRTRIVSRLKPNWVLRRDNMEEITNPLQAIQMVMDTLGIPY.

The tract at residues 1–26 (MANRRVGRGCWEVSPTERRPPAAEEE) is disordered. A phosphoserine mark is found at serine 274, serine 277, serine 361, serine 386, and serine 419. Positions 555-564 (EVTPSSTTAS) are enriched in polar residues. Positions 555–576 (EVTPSSTTASVARKRKSDGSME) are disordered. The residue at position 599 (serine 599) is a Phosphoserine. The Calponin-homology (CH) 1 domain maps to 914–1050 (KASKEILLAF…LLWKIAFAFQ (137 aa)). The stretch at 1051 to 1072 (VDISLNLDQLKEEIAFLKHTKS) forms a coiled coil. Serine 1097 is modified (phosphoserine). The Calponin-homology (CH) 2 domain occupies 1104 to 1255 (SENIKLLMDW…YLSFLCARLL (152 aa)). IQ domains follow at residues 1341–1372 (QNKA…IILQ), 1387–1416 (YLWA…MLKS), 1576–1607 (LKKT…VIIQ), 1599–1628 (MKKA…KTRS), 1626–1655 (TRSA…SVIK), 1649–1678 (ILTS…ATIK), 1722–1751 (MRES…AVIS), 1745–1776 (QRKA…IVIQ), 1795–1824 (VKKA…AALK), 1818–1847 (QSIA…SIIK), 1868–1897 (TKAA…AALK), 1891–1922 (EHQA…LVIQ), 1941–1972 (LRHA…IIIQ), 1964–1995 (QHKC…LLIQ), 2014–2043 (TKAA…AAVT), 2037–2068 (CNKA…IIIQ), 2087–2118 (LKKT…TFIK), 2110–2141 (MHRA…IVIQ), 2160–2191 (ILKA…TLIQ), 2183–2212 (MQIA…ITKT), 2233–2264 (LRHS…TLIQ), 2256–2287 (MHIA…IWIQ), 2305–2336 (VQNA…TFIQ), 2378–2409 (QRHS…TLIQ), 2401–2432 (MHSS…IFVQ), 2451–2482 (LRKS…VLIQ), 2524–2555 (QWHS…IIIQ), 2659–2690 (RTQA…TLIQ), 2682–2713 (MHRA…VVIQ), 2732–2761 (VQKS…EKMA), 2853–2884 (QKRA…VVLQ), 2903–2932 (IRSS…STIK), 2926–2957 (IKNS…KIQA), 2948–2979 (KVKA…KIIQ), 3023–3054 (RHRA…LVIQ), 3073–3104 (FKKS…RLLH), 3134–3163 (QVNS…SIKK), 3175–3204 (QNRA…GIIK), and 3198–3229 (FTSG…IRLS).

It localises to the cytoplasm. The protein resides in the cytoskeleton. The protein localises to the spindle. Its subcellular location is the nucleus. Its function is as follows. Probable role in mitotic spindle regulation and coordination of mitotic processes. May have a preferential role in regulating neurogenesis. This chain is Abnormal spindle-like microcephaly-associated protein homolog (ASPM), found in Pongo pygmaeus (Bornean orangutan).